A 359-amino-acid chain; its full sequence is Acyl-CoA Delta-9 desaturase (359 aa).

Helical transmembrane passes span 51-71 and 74-94; these read VILFIYLHLAALYGAYLAFTS and IATTIFAIILYQVSGVGITGG. Positions 96, 101, 133, 136, and 137 each coordinate Fe cation. Residues 96–101 carry the Histidine box-1 motif; sequence HRLWAH. A Histidine box-2 motif is present at residues 133-137; that stretch reads HRVHH. 2 helical membrane passes run 194–214 and 222–244; these read YLILMPIVCFLIPTTIPVYMW and WFVATLFRYTFTLNMTWLVNSAA. Residues His-245, His-274, His-277, and His-278 each contribute to the Fe cation site. A Histidine box-3 motif is present at residues 274–278; it reads HNYHH.

It belongs to the fatty acid desaturase type 1 family. It depends on Fe(2+) as a cofactor.

It is found in the membrane. It carries out the reaction octadecanoyl-CoA + 2 Fe(II)-[cytochrome b5] + O2 + 2 H(+) = (9Z)-octadecenoyl-CoA + 2 Fe(III)-[cytochrome b5] + 2 H2O. It catalyses the reaction hexadecanoyl-CoA + 2 Fe(II)-[cytochrome b5] + O2 + 2 H(+) = (9Z)-hexadecenoyl-CoA + 2 Fe(III)-[cytochrome b5] + 2 H2O. In terms of biological role, catalyzes the formation of a Delta9 double bond, acting on saturated fatty acyl substrates like palmitoyl-CoA (hexadecanoyl-CoA) and stearoyl-CoA (octadecanoyl-CoA) with higher desaturation activity on octadecanoyl-CoA than hexadecanoyl-CoA. This Acheta domesticus (House cricket) protein is Acyl-CoA Delta-9 desaturase.